The primary structure comprises 240 residues: MTDNQRQSTTDGQPETRDPAQATAEAAEQTQATQASAAVEGELQDGSADSATGASLSADDGADPEALRQRVEELEKALADAEQKAEEHWDQVLRMRAELENARRRAEKDVDQAKRQGLEKVCGDLLQVKDSLEMGVQAAEDAEADREKLLEGSQLTLKMLNQVFERFEIEEINPQGERFNPDYHEAMAAQPSDEQEPNTVLQVVQKGYRLQDRLLRPALVVVAKKGDGGAGSGGSVDETA.

Polar residues predominate over residues 1–13; it reads MTDNQRQSTTDGQ. The interval 1–89 is disordered; that stretch reads MTDNQRQSTT…DAEQKAEEHW (89 aa). Low complexity predominate over residues 20 to 38; the sequence is AQATAEAAEQTQATQASAA. Residues 65 to 89 show a composition bias toward basic and acidic residues; the sequence is EALRQRVEELEKALADAEQKAEEHW.

It belongs to the GrpE family. In terms of assembly, homodimer.

It localises to the cytoplasm. In terms of biological role, participates actively in the response to hyperosmotic and heat shock by preventing the aggregation of stress-denatured proteins, in association with DnaK and GrpE. It is the nucleotide exchange factor for DnaK and may function as a thermosensor. Unfolded proteins bind initially to DnaJ; upon interaction with the DnaJ-bound protein, DnaK hydrolyzes its bound ATP, resulting in the formation of a stable complex. GrpE releases ADP from DnaK; ATP binding to DnaK triggers the release of the substrate protein, thus completing the reaction cycle. Several rounds of ATP-dependent interactions between DnaJ, DnaK and GrpE are required for fully efficient folding. The chain is Protein GrpE from Halorhodospira halophila (strain DSM 244 / SL1) (Ectothiorhodospira halophila (strain DSM 244 / SL1)).